A 556-amino-acid polypeptide reads, in one-letter code: MNPSTAQAEVLVDELVRNGVRQVVLAPGSRNAPLSFALHDAAEAGRLDLHVRIDERSAGFLALGIATRTRRPVVVVCTSGTAATNLHPAVSEACHAGIPLIVLTADRPPELRAAGANQTIDQYRLYGTEVRLFDELAVAENRPGQNAYWRTQVCRAASMAAGTTWGGPVHLNLPFREPLVPSGDRDWCEPLDGRADGQRWTEVSGNESAPSTLSKVRSRRGLVLVADGGADSASAWGERYGWPVLSETGGVGLSGAAAISTGMWLLKLPGFMRDHRPEQVLCVGRNTVFRQVQSLLADSEVEVLLAHGGSHWPTPAHNVREVAETFGASPGPADPDWLTGWQQADQKASAALHAALDLERWPNGPVVARDVVDALPAGSLLVLGSSNPTRDVALAANHRPDVVVHRNRGVAGIDGTVSAAIGSALAHGGPSYALLGDLTFLHDSNGLMLGPQEQRPDLTIVVLNDDGGGIFSLLEQGSPEHRGSFERVFGTPHGTDIGSLCAAHGVEHTVVRQRSEFGVALRRRPGLRVVEVRADRAELRGVHERLHAAVRGALHG.

The protein belongs to the TPP enzyme family. MenD subfamily. In terms of assembly, homodimer. Requires Mg(2+) as cofactor. The cofactor is Mn(2+). Thiamine diphosphate serves as cofactor.

The enzyme catalyses isochorismate + 2-oxoglutarate + H(+) = 5-enolpyruvoyl-6-hydroxy-2-succinyl-cyclohex-3-ene-1-carboxylate + CO2. The protein operates within quinol/quinone metabolism; 1,4-dihydroxy-2-naphthoate biosynthesis; 1,4-dihydroxy-2-naphthoate from chorismate: step 2/7. Its pathway is quinol/quinone metabolism; menaquinone biosynthesis. Its function is as follows. Catalyzes the thiamine diphosphate-dependent decarboxylation of 2-oxoglutarate and the subsequent addition of the resulting succinic semialdehyde-thiamine pyrophosphate anion to isochorismate to yield 2-succinyl-5-enolpyruvyl-6-hydroxy-3-cyclohexene-1-carboxylate (SEPHCHC). This Saccharopolyspora erythraea (strain ATCC 11635 / DSM 40517 / JCM 4748 / NBRC 13426 / NCIMB 8594 / NRRL 2338) protein is 2-succinyl-5-enolpyruvyl-6-hydroxy-3-cyclohexene-1-carboxylate synthase.